Reading from the N-terminus, the 470-residue chain is ATP synthase subunit beta (470 aa).

Position 157 to 164 (157 to 164) interacts with ATP; the sequence is GGAGVGKT.

This sequence belongs to the ATPase alpha/beta chains family. In terms of assembly, F-type ATPases have 2 components, CF(1) - the catalytic core - and CF(0) - the membrane proton channel. CF(1) has five subunits: alpha(3), beta(3), gamma(1), delta(1), epsilon(1). CF(0) has three main subunits: a(1), b(2) and c(9-12). The alpha and beta chains form an alternating ring which encloses part of the gamma chain. CF(1) is attached to CF(0) by a central stalk formed by the gamma and epsilon chains, while a peripheral stalk is formed by the delta and b chains.

The protein resides in the cell inner membrane. It catalyses the reaction ATP + H2O + 4 H(+)(in) = ADP + phosphate + 5 H(+)(out). Its function is as follows. Produces ATP from ADP in the presence of a proton gradient across the membrane. The catalytic sites are hosted primarily by the beta subunits. The protein is ATP synthase subunit beta of Geobacter sp. (strain M21).